The chain runs to 485 residues: AP2-like ethylene-responsive transcription factor TOE2 (485 aa).

Positions 124 to 135 (GDFIGSGSGGGD) are enriched in gly residues. The tract at residues 124-161 (GDFIGSGSGGGDASRVMQPPSQPVKKSRRGPRSKSSQY) is disordered. The AP2/ERF DNA-binding region spans 160–216 (QYRGVTFYRRTGRWESHIWDCGKQVYLGGFDTAHAAARAYDRAAVKFRGLEADINFV).

The protein belongs to the AP2/ERF transcription factor family. AP2 subfamily.

It localises to the nucleus. In terms of biological role, probably acts as a transcriptional activator. Binds to the GCC-box pathogenesis-related promoter element. May be involved in the regulation of gene expression by stress factors and by components of stress signal transduction pathways. Regulates negatively the transition to flowering time and confers flowering time delay. This chain is AP2-like ethylene-responsive transcription factor TOE2 (TOE2), found in Arabidopsis thaliana (Mouse-ear cress).